The primary structure comprises 277 residues: Thiazole synthase (277 aa).

The active-site Schiff-base intermediate with DXP is the Lys-107. 1-deoxy-D-xylulose 5-phosphate contacts are provided by residues Gly-168, 194–195 (AG), and 216–217 (AS).

The protein belongs to the ThiG family. Homotetramer. Forms heterodimers with either ThiH or ThiS.

It localises to the cytoplasm. It catalyses the reaction [ThiS sulfur-carrier protein]-C-terminal-Gly-aminoethanethioate + 2-iminoacetate + 1-deoxy-D-xylulose 5-phosphate = [ThiS sulfur-carrier protein]-C-terminal Gly-Gly + 2-[(2R,5Z)-2-carboxy-4-methylthiazol-5(2H)-ylidene]ethyl phosphate + 2 H2O + H(+). It functions in the pathway cofactor biosynthesis; thiamine diphosphate biosynthesis. Functionally, catalyzes the rearrangement of 1-deoxy-D-xylulose 5-phosphate (DXP) to produce the thiazole phosphate moiety of thiamine. Sulfur is provided by the thiocarboxylate moiety of the carrier protein ThiS. In vitro, sulfur can be provided by H(2)S. This is Thiazole synthase from Cutibacterium acnes (strain DSM 16379 / KPA171202) (Propionibacterium acnes).